The sequence spans 304 residues: UDP-3-O-acyl-N-acetylglucosamine deacetylase (304 aa).

Zn(2+) contacts are provided by H78, H237, and D241. Catalysis depends on H264, which acts as the Proton donor.

It belongs to the LpxC family. Zn(2+) is required as a cofactor.

It catalyses the reaction a UDP-3-O-[(3R)-3-hydroxyacyl]-N-acetyl-alpha-D-glucosamine + H2O = a UDP-3-O-[(3R)-3-hydroxyacyl]-alpha-D-glucosamine + acetate. It functions in the pathway glycolipid biosynthesis; lipid IV(A) biosynthesis; lipid IV(A) from (3R)-3-hydroxytetradecanoyl-[acyl-carrier-protein] and UDP-N-acetyl-alpha-D-glucosamine: step 2/6. In terms of biological role, catalyzes the hydrolysis of UDP-3-O-myristoyl-N-acetylglucosamine to form UDP-3-O-myristoylglucosamine and acetate, the committed step in lipid A biosynthesis. This is UDP-3-O-acyl-N-acetylglucosamine deacetylase from Legionella pneumophila (strain Paris).